The chain runs to 328 residues: UDP-glucose 4-epimerase (328 aa).

Residues 20–21, 41–46, 57–58, 77–81, Ser-123, Tyr-149, and Lys-153 each bind NAD(+); these read FV, VRHAVN, DI, and CAARA. Substrate is bound by residues Ser-123 and Tyr-149. The active-site Proton acceptor is the Tyr-149. Substrate is bound by residues 198 to 199 and 215 to 217; these read GI and SIN.

The protein belongs to the NAD(P)-dependent epimerase/dehydratase family. In terms of assembly, homodimer. The cofactor is NAD(+).

The enzyme catalyses UDP-alpha-D-glucose = UDP-alpha-D-galactose. It participates in bacterial outer membrane biogenesis; LPS O-antigen biosynthesis. Functionally, involved in the metabolism of galactose. Catalyzes the conversion of UDP-galactose (UDP-Gal) to UDP-glucose (UDP-Glc) through a mechanism involving the transient reduction of NAD. The chain is UDP-glucose 4-epimerase (galE) from Vibrio cholerae.